The primary structure comprises 472 residues: 3-isopropylmalate dehydratase large subunit (472 aa).

[4Fe-4S] cluster contacts are provided by Cys-351, Cys-412, and Cys-415.

It belongs to the aconitase/IPM isomerase family. LeuC type 1 subfamily. In terms of assembly, heterodimer of LeuC and LeuD. It depends on [4Fe-4S] cluster as a cofactor.

It catalyses the reaction (2R,3S)-3-isopropylmalate = (2S)-2-isopropylmalate. Its pathway is amino-acid biosynthesis; L-leucine biosynthesis; L-leucine from 3-methyl-2-oxobutanoate: step 2/4. Its function is as follows. Catalyzes the isomerization between 2-isopropylmalate and 3-isopropylmalate, via the formation of 2-isopropylmaleate. This chain is 3-isopropylmalate dehydratase large subunit, found in Marinobacter nauticus (strain ATCC 700491 / DSM 11845 / VT8) (Marinobacter aquaeolei).